The primary structure comprises 953 residues: UvrABC system protein A (953 aa).

33–40 (GLSGSGKS) contacts ATP. 2 ABC transporter domains span residues 320–599 (WGST…EESI) and 619–949 (GHDN…RYLK). 652–659 (GVSGSGKS) serves as a coordination point for ATP. The segment at 752–778 (CEACQGDGLIKIEMHFLPDVYVKCDIC) adopts a C4-type zinc-finger fold.

It belongs to the ABC transporter superfamily. UvrA family. In terms of assembly, forms a heterotetramer with UvrB during the search for lesions.

The protein resides in the cytoplasm. In terms of biological role, the UvrABC repair system catalyzes the recognition and processing of DNA lesions. UvrA is an ATPase and a DNA-binding protein. A damage recognition complex composed of 2 UvrA and 2 UvrB subunits scans DNA for abnormalities. When the presence of a lesion has been verified by UvrB, the UvrA molecules dissociate. The chain is UvrABC system protein A from Rickettsia typhi (strain ATCC VR-144 / Wilmington).